Here is a 540-residue protein sequence, read N- to C-terminus: MRRSDNHHPTVWGDHFLAYANLSGANEWEEKEHEDQKGEVRKMLVLSPSKSLQKLELINTIQLLGVSYHFEHEIEESLSEIYNGYEEWIGKSHDLHVVALSFRLLRQQGYYVSSDVFRKFTDDQGNYNKALVNDTHGLLSLYEAAQFRVHDEEILDEAINFTTTHLNLLLPKLSNSLSMQVSYALKYPINKTMARAATRKYISFYQEEKSSCDQLLINFAKLDFNILQKMYKREMCDITRWWKELDLVNELGFARDRVVELYFWSLGVYFEPQYKVARNILTKVLCFVSITDDIYDTYGTLHELTLLTNAIERRNIDAIENLTSYMKLFYTALLHFYDEVEKELEKENKSFRVNFAISEMKKLVRAYFQEAKWYHGNTVPKMEEEYMKNGIQSSASPTLATASWLGMGDEATKEAFEWISTEPPILVASSNIARLLNDIVSHEREIERGDVASSIECYMKEYGATKEEAYMEIRKIIENNWKDLNRGCLKPTTVPRVLLMPVLNLTRVAEFVYKDEDAYTFSKNNLKDVIFMVLDDPIEE.

Asp292, Asp296, and Glu445 together coordinate Mg(2+). The short motif at 292–296 is the DDXXD motif element; it reads DDIYD.

This sequence belongs to the terpene synthase family. Tpsa subfamily. It depends on Mg(2+) as a cofactor. Mn(2+) is required as a cofactor.

The enzyme catalyses (2E,6E)-farnesyl diphosphate = germacrene A + diphosphate. Its pathway is secondary metabolite biosynthesis; terpenoid biosynthesis. Functionally, sesquiterpene synthase involved in the biosynthesis of volatile compounds. Mediates the conversion of (2E,6E)-farnesyl diphosphate (FPP) into germacrene A. The sequence is that of Sesquiterpene synthase 15b from Solanum habrochaites (Wild tomato).